We begin with the raw amino-acid sequence, 210 residues long: Glutathione S-transferase P (210 aa).

Residues 2-81 (ASYTIVYFPV…HLGRTLGLYG (80 aa)) form the GST N-terminal domain. Position 4 is a phosphotyrosine; by EGFR (tyrosine 4). Glutathione contacts are provided by residues tyrosine 8, arginine 14, tryptophan 39, lysine 45, and 52 to 53 (QL). At threonine 62 the chain carries Phosphothreonine. Glutathione is bound at residue 65–66 (QS). The 122-residue stretch at 83–204 (DQREAALVDM…ASPEHVNRPI (122 aa)) folds into the GST C-terminal domain. 2 positions are modified to N6-succinyllysine: lysine 103 and lysine 116. Lysine 128 is modified (N6-acetyllysine).

It belongs to the GST superfamily. Pi family. Homodimer. Interacts with CDK5.

The protein localises to the cytoplasm. Its subcellular location is the mitochondrion. It is found in the nucleus. It carries out the reaction RX + glutathione = an S-substituted glutathione + a halide anion + H(+). The enzyme catalyses prostaglandin J2 + glutathione = prostaglandin J2-S-(R)-glutathione. It catalyses the reaction prostaglandin J2 + glutathione = prostaglandin J2-S-(S)-glutathione. The catalysed reaction is prostaglandin A2 + glutathione = prostaglandin A2-S-(S)-glutathione. It carries out the reaction 11(S)-hydroxy-14(S),15(S)-epoxy-(5Z,8Z,12E)-eicosatrienoate + glutathione = (11S,15S)-dihydroxy-14(R)-S-glutathionyl-(5Z,8Z,12E)-eicosatrienoate. Its function is as follows. Conjugation of reduced glutathione to a wide number of exogenous and endogenous hydrophobic electrophiles. Involved in the formation of glutathione conjugates of both prostaglandin A2 (PGA2) and prostaglandin J2 (PGJ2). Participates in the formation of novel hepoxilin regioisomers. Negatively regulates CDK5 activity via p25/p35 translocation to prevent neurodegeneration. In Capra hircus (Goat), this protein is Glutathione S-transferase P (GSTP1).